Reading from the N-terminus, the 77-residue chain is Distinctin-like peptide (77 aa).

The first 19 residues, 1 to 19 (LKKSLFLVTFLALVPLFLC), serve as a signal peptide directing secretion. Positions 20-39 (EEEKREEENEERQDDDQSEE) are excised as a propeptide.

This sequence belongs to the frog skin active peptide (FSAP) family. Expressed by the skin glands.

It is found in the secreted. Functionally, has antimicrobial activity. The chain is Distinctin-like peptide from Pithecopus azureus (Orange-legged monkey tree frog).